Reading from the N-terminus, the 39-residue chain is Photosystem II reaction center protein Psb30 (39 aa).

Residues 12–32 (IFQLTFVGLIMVAGPVVIFLL) traverse the membrane as a helical segment.

This sequence belongs to the Psb30/Ycf12 family. PSII is composed of 1 copy each of membrane proteins PsbA, PsbB, PsbC, PsbD, PsbE, PsbF, PsbH, PsbI, PsbJ, PsbK, PsbL, PsbM, PsbT, PsbX, PsbY, PsbZ, Psb30/Ycf12, peripheral proteins PsbO, CyanoQ (PsbQ), PsbU, PsbV and a large number of cofactors. It forms dimeric complexes.

The protein resides in the cellular thylakoid membrane. Functionally, a core subunit of photosystem II (PSII), probably helps stabilize the reaction center. The protein is Photosystem II reaction center protein Psb30 of Rippkaea orientalis (strain PCC 8801 / RF-1) (Cyanothece sp. (strain PCC 8801)).